A 520-amino-acid chain; its full sequence is Vacuolar protein sorting-associated protein 9A (520 aa).

The VPS9 domain occupies 102-246 (VIADEKLFQK…ISNIDAKSIS (145 aa)). 2 residues coordinate GTP: asparagine 180 and aspartate 185. Disordered regions lie at residues 267–331 (DSQT…AESI), 396–433 (LAPS…ETDR), and 464–520 (LVEG…EASE). Polar residues predominate over residues 287-323 (LQKTQSLNPKRENTLFQSKSSDSLSGTNELLNINSET). Serine 330 is subject to Phosphoserine. Low complexity predominate over residues 396-407 (LAPSSSPLQASS). 2 stretches are compositionally biased toward basic and acidic residues: residues 413 to 433 (KESE…ETDR) and 464 to 497 (LVEG…REGD).

Homodimer. The homodimer interacts with RABF2B. Interacts with RABF1 and RABF2A. As to expression, widely expressed.

Its function is as follows. Functions as a guanine nucleotide exchange factor (GEF) for Rab small GTPases. Activates specifically RABF1, RABF2A and RABF2B proteins. Required for early stages of embryogenesis, cytokinesis, embryogenesis, and organ development. Is essential for the establishment or maintenance of the polar localization of the auxin efflux carrier PIN1. In Arabidopsis thaliana (Mouse-ear cress), this protein is Vacuolar protein sorting-associated protein 9A.